The following is an 86-amino-acid chain: Small ribosomal subunit protein bS16 (86 aa).

The protein belongs to the bacterial ribosomal protein bS16 family.

This Stenotrophomonas maltophilia (strain R551-3) protein is Small ribosomal subunit protein bS16.